A 324-amino-acid polypeptide reads, in one-letter code: NAD(P)H-dependent D-xylose reductase XYR1 (324 aa).

The active-site Proton donor is Tyr-50. His-112 provides a ligand contact to substrate. NAD(+) contacts are provided by residues 168 to 169 (SN), 217 to 226 (SSFGPASFKE), and 273 to 283 (KSSREKTMKSN).

The protein belongs to the aldo/keto reductase family.

The enzyme catalyses xylitol + NAD(+) = D-xylose + NADH + H(+). The catalysed reaction is xylitol + NADP(+) = D-xylose + NADPH + H(+). It participates in carbohydrate metabolism; D-xylose degradation. Functionally, catalyzes the initial reaction in the xylose utilization pathway by reducing D-xylose into xylitol. Xylose is a major component of hemicelluloses such as xylan. Most fungi utilize D-xylose via three enzymatic reactions, xylose reductase (XR), xylitol dehydrogenase (XDH), and xylulokinase, to form xylulose 5-phosphate, which enters pentose phosphate pathway. This Pyricularia oryzae (strain 70-15 / ATCC MYA-4617 / FGSC 8958) (Rice blast fungus) protein is NAD(P)H-dependent D-xylose reductase XYR1 (XYR1).